Consider the following 210-residue polypeptide: Pyridoxine/pyridoxamine 5'-phosphate oxidase (210 aa).

Substrate-binding positions include 7 to 10 (RDEY) and Lys-65. FMN-binding positions include 60–65 (RMVLLK), 75–76 (FT), Arg-81, Lys-82, and Gln-104. 3 residues coordinate substrate: Tyr-122, Arg-126, and Ser-130. Residues 139–140 (QS) and Trp-183 each bind FMN. Position 189–191 (189–191 (RLH)) interacts with substrate. Arg-193 is an FMN binding site.

This sequence belongs to the pyridoxamine 5'-phosphate oxidase family. As to quaternary structure, homodimer. It depends on FMN as a cofactor.

The enzyme catalyses pyridoxamine 5'-phosphate + O2 + H2O = pyridoxal 5'-phosphate + H2O2 + NH4(+). It catalyses the reaction pyridoxine 5'-phosphate + O2 = pyridoxal 5'-phosphate + H2O2. Its pathway is cofactor metabolism; pyridoxal 5'-phosphate salvage; pyridoxal 5'-phosphate from pyridoxamine 5'-phosphate: step 1/1. It participates in cofactor metabolism; pyridoxal 5'-phosphate salvage; pyridoxal 5'-phosphate from pyridoxine 5'-phosphate: step 1/1. Functionally, catalyzes the oxidation of either pyridoxine 5'-phosphate (PNP) or pyridoxamine 5'-phosphate (PMP) into pyridoxal 5'-phosphate (PLP). The chain is Pyridoxine/pyridoxamine 5'-phosphate oxidase from Haemophilus influenzae (strain ATCC 51907 / DSM 11121 / KW20 / Rd).